We begin with the raw amino-acid sequence, 203 residues long: ATP-dependent Clp protease proteolytic subunit (203 aa).

The active-site Nucleophile is S100. Residue H125 is part of the active site.

It belongs to the peptidase S14 family. As to quaternary structure, component of the chloroplastic Clp protease core complex.

It is found in the plastid. The protein localises to the chloroplast stroma. It carries out the reaction Hydrolysis of proteins to small peptides in the presence of ATP and magnesium. alpha-casein is the usual test substrate. In the absence of ATP, only oligopeptides shorter than five residues are hydrolyzed (such as succinyl-Leu-Tyr-|-NHMec, and Leu-Tyr-Leu-|-Tyr-Trp, in which cleavage of the -Tyr-|-Leu- and -Tyr-|-Trp bonds also occurs).. Functionally, cleaves peptides in various proteins in a process that requires ATP hydrolysis. Has a chymotrypsin-like activity. Plays a major role in the degradation of misfolded proteins. The sequence is that of ATP-dependent Clp protease proteolytic subunit from Dioscorea elephantipes (Elephant's foot yam).